We begin with the raw amino-acid sequence, 458 residues long: Tol-Pal system protein TolB (458 aa).

The N-terminal stretch at 1 to 23 (MSSVIRKWALTALMAVSSTALFA) is a signal peptide.

The protein belongs to the TolB family. As to quaternary structure, the Tol-Pal system is composed of five core proteins: the inner membrane proteins TolA, TolQ and TolR, the periplasmic protein TolB and the outer membrane protein Pal. They form a network linking the inner and outer membranes and the peptidoglycan layer.

It localises to the periplasm. In terms of biological role, part of the Tol-Pal system, which plays a role in outer membrane invagination during cell division and is important for maintaining outer membrane integrity. The protein is Tol-Pal system protein TolB of Zymomonas mobilis subsp. mobilis (strain ATCC 31821 / ZM4 / CP4).